Here is a 552-residue protein sequence, read N- to C-terminus: MIMFCVQCEQTIRTPAGNGCSYAQGMCGKTAETSDLQDLLIAALQGLSAWAVKAREYGIINHDVDSFAPRAFFSTLTNVNFDSPRIVGYAREAIALREALKAQCLAVDANARVDNPMADLQLVSDDLGELQRQAAEFTPNKDKAAIGENILGLRLLCLYGLKGAAAYMEHAHVLGQYDNDIYAQYHKIMAWLGTWPADMNALLECSMEIGQMNFKVMSILDAGETGKYGHPTPTQVNVKATAGKCILISGHDLKDLYNLLEQTEGTGVNVYTHGEMLPAHGYPELRKFKHLVGNYGSGWQNQQVEFARFPGPIVMTSNCIIDPTVGAYDDRIWTRSIVGWPGVRHLDGEDFSAVIAQAQQMAGFPYSEIPHLITVGFGRQTLLGAADTLIDLVSREKLRHIFLLGGCDGARGERHYFTDFATSVPDDCLILTLACGKYRFNKLEFGDIEGLPRLVDAGQCNDAYSAIILAVTLAEKLGCGVNDLPLSLVLSWFEQKAIVILLTLLSLGVKNIVTGPTAPGFLTPDLLAVLNEKFGLRSITTVEEDMKQLLSA.

4 residues coordinate [2Fe-2S] cluster: cysteine 5, cysteine 8, cysteine 20, and cysteine 27. Hybrid [4Fe-2O-2S] cluster contacts are provided by histidine 251, glutamate 275, cysteine 319, cysteine 407, cysteine 435, cysteine 460, glutamate 494, and lysine 496. Cysteine 407 is subject to Cysteine persulfide.

The protein belongs to the HCP family. [2Fe-2S] cluster is required as a cofactor. It depends on hybrid [4Fe-2O-2S] cluster as a cofactor.

It localises to the cytoplasm. It catalyses the reaction A + NH4(+) + H2O = hydroxylamine + AH2 + H(+). In terms of biological role, catalyzes the reduction of hydroxylamine to form NH(3) and H(2)O. The sequence is that of Hydroxylamine reductase from Escherichia coli (strain UTI89 / UPEC).